The chain runs to 100 residues: Small ribosomal subunit protein uS14c (100 aa).

It belongs to the universal ribosomal protein uS14 family. As to quaternary structure, part of the 30S ribosomal subunit.

It localises to the plastid. It is found in the cyanelle. Functionally, binds 16S rRNA, required for the assembly of 30S particles. In Cyanophora paradoxa, this protein is Small ribosomal subunit protein uS14c.